The following is a 467-amino-acid chain: F-box only protein 6 (467 aa).

One can recognise an F-box domain in the interval 114–163; sequence QEIWQEFPQDLFEDVVSRLPMATFFQFRAVCRKWNALIDSDSFSRCFTEL. 3 Kelch repeats span residues 163-211, 252-305, and 406-456; these read LPQT…MASA, GMTL…NFKS, and CLGN…IACG.

This chain is F-box only protein 6 (FBX6), found in Arabidopsis thaliana (Mouse-ear cress).